The primary structure comprises 662 residues: MSERKEGRGKGKGKKKDRGSRGKPGPAEGDPSPALPPRLKEMKSQESAAGSKLVLRCETSSEYSSLRFKWFKNGNELNRKNKPENIKIQKKPGKSELRINKASLADSGEYMCKVISKLGNDSASANITIVESNEFITGMPASTETAYVSSESPIRISVSTEGANTSSSTSTSTTGTSHLIKCAEKEKTFCVNGGECFTVKDLSNPSRYLCKCPNEFTGDRCQNYVMASFYMTSRRKRQETEKPLERKLDHSLVKESKAEELYQKRVLTITGICIALLVVGIMCVVAYCKTKKQRQKLHDRLRQSLRSERSNLVNIANGPHHPNPPPENVQLVNQYVSKNVISSEHIVEREVETSFSTSHYTSTAHHSTTVTQTPSHSWSNGHTESVISESNSVIMMSSVENSRHSSPAGGPRGRLHGLGGPRDNSFLRHARETPDSYRDSPHSERYVSAMTTPARMSPVDFHTPSSPKSPPSEMSPPVSSMTVSMPSVAVSPFVEEERPLLLVTPPRLREKKYDHHPQQLNSFHHNPAHQSTSLPPSPLRIVEDEEYETTQEYESVQEPVKKVTNSRRAKRTKPNGHIANRLEMDSNTSSVSSNSESETEDERVGEDTPFLGIQNPLAASLEVAPAFRLAESRTNPAGRFSTQEELQARLSSVIANQDPIAV.

A propeptide spanning residues 1 to 13 is cleaved from the precursor; that stretch reads MSERKEGRGKGKG. The tract at residues 1–52 is disordered; it reads MSERKEGRGKGKGKKKDRGSRGKPGPAEGDPSPALPPRLKEMKSQESAAGSK. The Extracellular segment spans residues 14-265; that stretch reads KKKDRGSRGK…SKAEELYQKR (252 aa). In terms of domain architecture, Ig-like C2-type spans 37-128; it reads PRLKEMKSQE…GNDSASANIT (92 aa). Cysteines 57 and 112 form a disulfide. Residues Asn120, Asn126, and Asn164 are each glycosylated (N-linked (GlcNAc...) asparagine). In terms of domain architecture, EGF-like spans 178-222; it reads HLIKCAEKEKTFCVNGGECFTVKDLSNPSRYLCKCPNEFTGDRCQ. Disulfide bonds link Cys182–Cys196, Cys190–Cys210, and Cys212–Cys221. The helical transmembrane segment at 266-288 threads the bilayer; it reads VLTITGICIALLVVGIMCVVAYC. The Cytoplasmic portion of the chain corresponds to 289 to 662; the sequence is KTKKQRQKLH…VIANQDPIAV (374 aa). Residues 358–373 show a composition bias toward low complexity; that stretch reads SHYTSTAHHSTTVTQT. Disordered stretches follow at residues 358–383, 398–480, and 547–610; these read SHYT…NGHT, SVEN…PVSS, and YETT…DTPF. The segment covering 374–383 has biased composition (polar residues); sequence PSHSWSNGHT. Over residues 410 to 420 the composition is skewed to gly residues; the sequence is GPRGRLHGLGG. Basic and acidic residues predominate over residues 425 to 445; sequence SFLRHARETPDSYRDSPHSER. Basic residues predominate over residues 564–574; that stretch reads TNSRRAKRTKP. The span at 585 to 596 shows a compositional bias: low complexity; sequence DSNTSSVSSNSE.

The protein belongs to the neuregulin family. In terms of assembly, the cytoplasmic domain interacts with the LIM domain region of LIMK1. Forms a ternary complex with ERBB3 and ITGAV:ITGB3 or ITGA6:ITGB4. Interacts with NRDC and BACE1. Post-translationally, proteolytic cleavage close to the plasma membrane on the external face leads to the release of the soluble growth factor form. In terms of processing, N- and O-glycosylated. Extensive glycosylation precedes the proteolytic cleavage. In terms of tissue distribution, widely expressed. Most tissues contain isoform alpha2A and isoform alpha2B. Isoform Alpha2 and isoform beta2 are the predominant forms in mesenchymal and non-neuronal organs. Isoform Beta1 is enriched in brain and spinal cord, but not in muscle and heart. Isoform Alpha2C is highly expressed in spinal cord, moderately in lung, brain, ovary, and stomach, in low amounts in the kidney, skin and heart and not detected in the liver, spleen, and placenta.

The protein resides in the cell membrane. Its subcellular location is the secreted. Direct ligand for ERBB3 and ERBB4 tyrosine kinase receptors. Concomitantly recruits ERBB1 and ERBB2 coreceptors, resulting in ligand-stimulated tyrosine phosphorylation and activation of the ERBB receptors. The multiple isoforms perform diverse functions such as inducing growth and differentiation of epithelial, glial, neuronal, and skeletal muscle cells; inducing expression of acetylcholine receptor in synaptic vesicles during the formation of the neuromuscular junction; stimulating lobuloalveolar budding and milk production in the mammary gland and inducing differentiation of mammary tumor cells; stimulating Schwann cell proliferation; implication in the development of the myocardium such as trabeculation of the developing heart. Binds to ERBB4 and ERBB3. Acts as a ligand for integrins and binds (via EGF domain) to integrins ITGAV:ITGB3 or ITGA6:ITGB4. Its binding to integrins and subsequent ternary complex formation with integrins and ERRB3 are essential for NRG1-ERBB signaling. Induces the phosphorylation and activation of MAPK3/ERK1, MAPK1/ERK2 and AKT1, and ligand-dependent ERBB4 endocytosis is essential for the NRG1-mediated activation of these kinases in neurons. The chain is Pro-neuregulin-1, membrane-bound isoform (Nrg1) from Rattus norvegicus (Rat).